A 470-amino-acid chain; its full sequence is Light-independent protochlorophyllide reductase subunit N (470 aa).

[4Fe-4S] cluster contacts are provided by cysteine 23, cysteine 48, and cysteine 108.

It belongs to the BchN/ChlN family. Protochlorophyllide reductase is composed of three subunits; ChlL, ChlN and ChlB. Forms a heterotetramer of two ChlB and two ChlN subunits. Requires [4Fe-4S] cluster as cofactor.

Its subcellular location is the plastid. It is found in the chloroplast. It carries out the reaction chlorophyllide a + oxidized 2[4Fe-4S]-[ferredoxin] + 2 ADP + 2 phosphate = protochlorophyllide a + reduced 2[4Fe-4S]-[ferredoxin] + 2 ATP + 2 H2O. Its pathway is porphyrin-containing compound metabolism; chlorophyll biosynthesis (light-independent). In terms of biological role, component of the dark-operative protochlorophyllide reductase (DPOR) that uses Mg-ATP and reduced ferredoxin to reduce ring D of protochlorophyllide (Pchlide) to form chlorophyllide a (Chlide). This reaction is light-independent. The NB-protein (ChlN-ChlB) is the catalytic component of the complex. In Zygnema circumcarinatum (Green alga), this protein is Light-independent protochlorophyllide reductase subunit N.